The chain runs to 257 residues: NAD-capped RNA hydrolase NudC (257 aa).

Arg-69 contacts substrate. Cys-98 and Cys-101 together coordinate Zn(2+). Glu-111 is a binding site for substrate. Residues Cys-116 and Cys-119 each coordinate Zn(2+). Tyr-124 is a substrate binding site. The Nudix hydrolase domain maps to 125–248; that stretch reads PQIAPCIIVA…TVARRLIEDT (124 aa). Ala-158, Glu-174, and Glu-178 together coordinate a divalent metal cation. The Nudix box motif lies at 159 to 180; that stretch reads GFVEVGETLEQAVAREVMEESG. 192 to 199 contacts substrate; it reads QPWPFPQS. Glu-219 provides a ligand contact to a divalent metal cation. Residue Ala-241 participates in substrate binding.

Belongs to the Nudix hydrolase family. NudC subfamily. As to quaternary structure, homodimer. The cofactor is Mg(2+). Requires Mn(2+) as cofactor. It depends on Zn(2+) as a cofactor.

The enzyme catalyses a 5'-end NAD(+)-phospho-ribonucleoside in mRNA + H2O = a 5'-end phospho-adenosine-phospho-ribonucleoside in mRNA + beta-nicotinamide D-ribonucleotide + 2 H(+). It catalyses the reaction NAD(+) + H2O = beta-nicotinamide D-ribonucleotide + AMP + 2 H(+). The catalysed reaction is NADH + H2O = reduced beta-nicotinamide D-ribonucleotide + AMP + 2 H(+). Its function is as follows. mRNA decapping enzyme that specifically removes the nicotinamide adenine dinucleotide (NAD) cap from a subset of mRNAs by hydrolyzing the diphosphate linkage to produce nicotinamide mononucleotide (NMN) and 5' monophosphate mRNA. The NAD-cap is present at the 5'-end of some mRNAs and stabilizes RNA against 5'-processing. Has preference for mRNAs with a 5'-end purine. Catalyzes the hydrolysis of a broad range of dinucleotide pyrophosphates. The protein is NAD-capped RNA hydrolase NudC of Salmonella dublin (strain CT_02021853).